Here is a 1008-residue protein sequence, read N- to C-terminus: PWWP domain-containing protein 3 (1008 aa).

Positions V78–E122 form a coiled coil. The segment at L84–G124 is disordered. Residues D87–E122 are compositionally biased toward acidic residues. The region spanning V127–S188 is the PWWP domain. Disordered stretches follow at residues E307 to W339, E399 to E606, and N668 to S874. Over residues N321–E330 the composition is skewed to acidic residues. Positions E399–S409 are enriched in basic and acidic residues. Residues D473–E490 are compositionally biased toward acidic residues. Basic and acidic residues-rich tracts occupy residues R511–E522, S677–E687, and Q707–H725. The segment covering G726–E738 has biased composition (basic residues). Composition is skewed to basic and acidic residues over residues S739 to K758, S768 to K787, and N794 to K818. 3 consecutive short sequence motifs (nuclear localization signal) follow at residues T786–K793, T809–S816, and E841–R848. Residues V804 to K824 are a coiled coil. Basic residues predominate over residues K842–K854.

The protein belongs to the PDP family. In terms of assembly, interacts with DEK3. Binds to LHP1, MSI4/FVE and MSI5. Component of the PRC2 (polycomb repressive complex 2) complex which regulates histone methylation on histone H3K27.

The protein localises to the nucleus. Functionally, together with PDP1, PDP2 and PDP6, interacts with MSI4/FVE and MSI5 to suppress FLC, MAF4 and MAF5 expression by regulating the function of the PRC2 complex and modulating H3K27me3 level, thereby promoting flowering. This Arabidopsis thaliana (Mouse-ear cress) protein is PWWP domain-containing protein 3.